Reading from the N-terminus, the 112-residue chain is Small ribosomal subunit protein bS6 (112 aa).

The protein belongs to the bacterial ribosomal protein bS6 family.

Binds together with bS18 to 16S ribosomal RNA. The sequence is that of Small ribosomal subunit protein bS6 from Chlamydia felis (strain Fe/C-56) (Chlamydophila felis).